Reading from the N-terminus, the 306-residue chain is tRNA pseudouridine synthase B (306 aa).

Residue Asp47 is the Nucleophile of the active site.

The protein belongs to the pseudouridine synthase TruB family. Type 1 subfamily.

It carries out the reaction uridine(55) in tRNA = pseudouridine(55) in tRNA. In terms of biological role, responsible for synthesis of pseudouridine from uracil-55 in the psi GC loop of transfer RNAs. This is tRNA pseudouridine synthase B from Neisseria gonorrhoeae (strain NCCP11945).